Here is an 81-residue protein sequence, read N- to C-terminus: Control protein C.BamHI (81 aa).

The region spanning 13 to 68 is the HTH cro/C1-type domain; it reads VRQIRLSKSNMSQEKLAFECDLHRTYISDIERGTRNVSLDNIEKISKALGVQPKDL. A DNA-binding region (H-T-H motif) is located at residues 25 to 44; sequence QEKLAFECDLHRTYISDIER.

May help modulate methylase (M) and restriction enzyme (R) expression as cells undergo physiological changes such as sporulation or transformation. The polypeptide is Control protein C.BamHI (Bacillus amyloliquefaciens (Bacillus velezensis)).